A 734-amino-acid polypeptide reads, in one-letter code: Regulator of G-protein signaling rgs-6 (734 aa).

Residues 1-24 (MSTPCSGNEPATPTNTSPNNETSN) are disordered. The span at 8-24 (NEPATPTNTSPNNETSN) shows a compositional bias: low complexity. Positions 46 to 157 (IFKKVIRDPV…YDCWPRFLRS (112 aa)) constitute an RGS domain. Disordered stretches follow at residues 162–236 (QPSF…SPTH), 489–515 (HAVS…YSPA), and 538–734 (VNAG…AAYV). Residues 166 to 176 (TDEELAADDED) show a composition bias toward acidic residues. Residues 180-191 (HSQPTSLNNTNE) show a composition bias toward polar residues. Low complexity predominate over residues 194 to 208 (AAAQQSQPAPNAPAA). Polar residues-rich tracts occupy residues 494-506 (SDPN…SQDR) and 538-557 (VNAG…SKNR). Composition is skewed to basic and acidic residues over residues 563 to 585 (SKTE…RSDD) and 606 to 619 (TTEE…KSGD). Positions 642-694 (AAAAAAGASPSTSAPSTSTSVQTKTTTSPTKSPTSTTITTSGTTTSATSSVAT) are enriched in low complexity. 2 stretches are compositionally biased toward polar residues: residues 705–715 (SASTPATSSQL) and 724–734 (RESSWQTAAYV).

The sequence is that of Regulator of G-protein signaling rgs-6 from Caenorhabditis elegans.